We begin with the raw amino-acid sequence, 153 residues long: D-erythrulose-4-phosphate isomerase 1 (153 aa).

Residue cysteine 69 is the Proton acceptor of the active site.

The protein belongs to the LacAB/RpiB family.

It carries out the reaction D-erythrulose 4-phosphate = D-erythrose 4-phosphate. Its pathway is carbohydrate metabolism; erythritol degradation. The protein operates within carbohydrate metabolism; D-threitol degradation. Its function is as follows. Catalyzes the isomerization of D-erythrulose-4P to D-erythrose-4P. Involved in the degradation pathways of erythritol and D-threitol, that allow M.smegmatis to grow on these compounds as the sole carbon source. This is D-erythrulose-4-phosphate isomerase 1 from Mycolicibacterium smegmatis (strain ATCC 700084 / mc(2)155) (Mycobacterium smegmatis).